We begin with the raw amino-acid sequence, 229 residues long: 7-cyano-7-deazaguanine synthase (229 aa).

9 to 19 serves as a coordination point for ATP; the sequence is YSGGLDSTTCM. Zn(2+) contacts are provided by Cys-189, Cys-199, Cys-202, and Cys-205.

This sequence belongs to the QueC family. The cofactor is Zn(2+).

The catalysed reaction is 7-carboxy-7-deazaguanine + NH4(+) + ATP = 7-cyano-7-deazaguanine + ADP + phosphate + H2O + H(+). Its pathway is purine metabolism; 7-cyano-7-deazaguanine biosynthesis. Catalyzes the ATP-dependent conversion of 7-carboxy-7-deazaguanine (CDG) to 7-cyano-7-deazaguanine (preQ(0)). The chain is 7-cyano-7-deazaguanine synthase from Geotalea daltonii (strain DSM 22248 / JCM 15807 / FRC-32) (Geobacter daltonii).